We begin with the raw amino-acid sequence, 558 residues long: Serine palmitoyltransferase 2 (558 aa).

Positions 33–42 (HDDDEEEEEV) are enriched in acidic residues. Positions 33–57 (HDDDEEEEEVKVDQGSEETTSSHDI) are disordered. Lys384 carries the N6-(pyridoxal phosphate)lysine modification.

This sequence belongs to the class-II pyridoxal-phosphate-dependent aminotransferase family. In terms of assembly, heterodimer of sptl-1/sptl-2. Pyridoxal 5'-phosphate is required as a cofactor.

It carries out the reaction L-serine + hexadecanoyl-CoA + H(+) = 3-oxosphinganine + CO2 + CoA. The protein operates within lipid metabolism; sphingolipid metabolism. In terms of biological role, component of the serine palmitoyltransferase (SPT) that catalyzes the first committed step in sphingolipid biosynthesis, which is the condensation of an acyl-CoA species and L-serine. The catalytic core is composed of a heterodimer of sptl-1 and sptl-2 or sptl-1 and sptl-3. Required for the specification of abicobasal polarity and development of the gut lumen. The protein is Serine palmitoyltransferase 2 (sptl-2) of Caenorhabditis elegans.